The primary structure comprises 116 residues: uncharacterized protein (116 aa).

The chain crosses the membrane as a helical span at residues valine 52–phenylalanine 72.

Its subcellular location is the mitochondrion membrane. This is an uncharacterized protein from Arabidopsis thaliana (Mouse-ear cress).